The primary structure comprises 308 residues: Barttin (308 aa).

Residues 1–5 (MADEK) lie on the Cytoplasmic side of the membrane. The interval 1 to 72 (MADEKTFRIG…VPADSDFQGM (72 aa)) is regulates channel membrane trafficking and anion conductance. The chain crosses the membrane as a helical span at residues 6–26 (TFRIGFIVLGLFLLSLGTFLM). The Extracellular segment spans residues 27 to 32 (SHDRPQ). Residues 33 to 53 (VYGTFYAMGSIMVIGGVLWSM) form a helical membrane-spanning segment. S-palmitoyl cysteine attachment occurs at residues cysteine 54 and cysteine 56. At 54–308 (CQCYPKITFV…ELGFEPDVQG (255 aa)) the chain is on the cytoplasmic side. Serine 79 and serine 107 each carry phosphoserine. Disordered stretches follow at residues 127–149 (PLLA…HSAQ) and 162–308 (LDEK…DVQG). The span at 162–171 (LDEKEGEKSR) shows a compositional bias: basic and acidic residues. Polar residues predominate over residues 172–183 (SQSSPPACSQGS). Residues 274–283 (EEPEQEEEDL) show a composition bias toward acidic residues. Serine 290 bears the Phosphoserine mark.

Interacts with CLCNK channels. Forms heteromers with CLCNKA in the thin ascending limb of Henle and with CLCNKB in the thick ascending limb and more distal segments. In terms of processing, palmitoylation is necessary for activation of plasma membrane-inserted CLC-K/barttin channels. Expressed along the distal nephron.

It is found in the basolateral cell membrane. In terms of biological role, regulatory subunit of anion-selective CLCNKA:BSND and CLCNKB:BSND heteromeric channels involved in basolateral chloride conductance along the nephron to achieve urine concentration and maintain systemic acid-base homeostasis, and in the stria vascularis of the inner ear to establish the endocochlear potential necessary for normal hearing. Most likely acts as a chaperone that allosterically regulates proper sorting of CLCNKA:BSND and CLCNKB:BSND channels at the basolateral plasma membrane domain and functional switch to ion conducting state. Mediates constitutive opening of channel common gates. This chain is Barttin, found in Rattus norvegicus (Rat).